The following is a 273-amino-acid chain: uncharacterized protein (273 aa).

The chain crosses the membrane as a helical span at residues 7-27 (LTLGICLVLLIILIVGYVIMT).

It belongs to the staphylococcal tandem lipoprotein family.

It localises to the cell membrane. This is an uncharacterized protein from Staphylococcus aureus (strain MSSA476).